The primary structure comprises 138 residues: Transcription antitermination protein NusB (138 aa).

It belongs to the NusB family.

Functionally, involved in transcription antitermination. Required for transcription of ribosomal RNA (rRNA) genes. Binds specifically to the boxA antiterminator sequence of the ribosomal RNA (rrn) operons. The protein is Transcription antitermination protein NusB of Helicobacter pylori (strain G27).